We begin with the raw amino-acid sequence, 421 residues long: UDP-N-acetylglucosamine 1-carboxyvinyltransferase (421 aa).

22 to 23 (KN) lines the phosphoenolpyruvate pocket. Arginine 93 is a UDP-N-acetyl-alpha-D-glucosamine binding site. Cysteine 117 serves as the catalytic Proton donor. Position 117 is a 2-(S-cysteinyl)pyruvic acid O-phosphothioketal (cysteine 117). Residues 122-126 (RPVDL), aspartate 308, and isoleucine 330 contribute to the UDP-N-acetyl-alpha-D-glucosamine site.

This sequence belongs to the EPSP synthase family. MurA subfamily.

The protein localises to the cytoplasm. The enzyme catalyses phosphoenolpyruvate + UDP-N-acetyl-alpha-D-glucosamine = UDP-N-acetyl-3-O-(1-carboxyvinyl)-alpha-D-glucosamine + phosphate. The protein operates within cell wall biogenesis; peptidoglycan biosynthesis. In terms of biological role, cell wall formation. Adds enolpyruvyl to UDP-N-acetylglucosamine. In Pseudomonas fluorescens (strain SBW25), this protein is UDP-N-acetylglucosamine 1-carboxyvinyltransferase.